Reading from the N-terminus, the 582-residue chain is Aspartate--tRNA ligase (582 aa).

E174 lines the L-aspartate pocket. Positions 198–201 (QITK) are aspartate. R220 lines the L-aspartate pocket. ATP-binding positions include 220 to 222 (RDE) and Q229. Residue H443 participates in L-aspartate binding. ATP is bound at residue E477. Position 484 (R484) interacts with L-aspartate. 529–532 (GLDR) is an ATP binding site.

The protein belongs to the class-II aminoacyl-tRNA synthetase family. Type 1 subfamily. As to quaternary structure, homodimer.

The protein resides in the cytoplasm. The catalysed reaction is tRNA(Asp) + L-aspartate + ATP = L-aspartyl-tRNA(Asp) + AMP + diphosphate. Functionally, catalyzes the attachment of L-aspartate to tRNA(Asp) in a two-step reaction: L-aspartate is first activated by ATP to form Asp-AMP and then transferred to the acceptor end of tRNA(Asp). In Streptococcus equi subsp. zooepidemicus (strain MGCS10565), this protein is Aspartate--tRNA ligase.